We begin with the raw amino-acid sequence, 213 residues long: High frequency lysogenization protein HflD homolog (213 aa).

Residues 79–122 (QGLNAELTRYTLSLMVLERKLSSAKGALNTLGDRINGLQRQLDH) are a coiled coil.

This sequence belongs to the HflD family.

It localises to the cytoplasm. The protein resides in the cell inner membrane. This chain is High frequency lysogenization protein HflD homolog, found in Salmonella typhi.